We begin with the raw amino-acid sequence, 153 residues long: uncharacterized protein (153 aa).

Residues 1–22 (MKAFNKLFSLVVASVLVFSLAG) form the signal peptide. Cysteine 23 is lipidated: N-palmitoyl cysteine. The S-diacylglycerol cysteine moiety is linked to residue cysteine 23.

To L.monocytogenes lmo0207.

Its subcellular location is the cell membrane. This is an uncharacterized protein from Escherichia coli (strain K12).